A 317-amino-acid polypeptide reads, in one-letter code: Heme-binding protein HMX1 (317 aa).

Residues 1 to 289 lie on the Cytoplasmic side of the membrane; sequence MEDSSNTIIP…FNKDSATRRA (289 aa). A helical; Anchor for type IV membrane protein transmembrane segment spans residues 290–310; it reads LHTVMLLVLSIIAIWVLYFLV.

Heme serves as cofactor.

The protein localises to the endoplasmic reticulum membrane. Its function is as follows. Plays an important role in the degradation of heme under conditions of iron deprivation. The polypeptide is Heme-binding protein HMX1 (HMX1) (Saccharomyces cerevisiae (strain ATCC 204508 / S288c) (Baker's yeast)).